We begin with the raw amino-acid sequence, 226 residues long: Uridylate kinase (226 aa).

Residue 6 to 10 participates in ATP binding; that stretch reads KISGK. Position 43 (Gly43) interacts with UMP. Gly44 and Arg48 together coordinate ATP. Residues Asp65 and 113-119 contribute to the UMP site; that span reads FQPGQST. 4 residues coordinate ATP: Thr139, Asn140, Tyr145, and Asp148.

Belongs to the UMP kinase family. In terms of assembly, homohexamer.

The protein resides in the cytoplasm. It carries out the reaction UMP + ATP = UDP + ADP. It functions in the pathway pyrimidine metabolism; CTP biosynthesis via de novo pathway; UDP from UMP (UMPK route): step 1/1. Its activity is regulated as follows. Inhibited by UTP. Its function is as follows. Catalyzes the reversible phosphorylation of UMP to UDP. The chain is Uridylate kinase from Saccharolobus islandicus (strain Y.N.15.51 / Yellowstone #2) (Sulfolobus islandicus).